We begin with the raw amino-acid sequence, 610 residues long: Zinc metalloproteinase-disintegrin-like acurhagin (610 aa).

The first 20 residues, 1 to 20, serve as a signal peptide directing secretion; the sequence is MIQVLLVTICLAAFPYQGSS. A propeptide spanning residues 21–191 is cleaved from the precursor; sequence IILESGDVND…ISQLNLIPEQ (171 aa). Glutamine 192 carries the post-translational modification Pyrrolidone carboxylic acid. The Peptidase M12B domain maps to 198–394; sequence KYVETVVVVD…HNPECIDNEP (197 aa). Residues glutamate 201 and aspartate 285 each coordinate Ca(2+). 3 disulfides stabilise this stretch: cysteine 309–cysteine 389, cysteine 349–cysteine 373, and cysteine 351–cysteine 356. Position 334 (histidine 334) interacts with Zn(2+). Glutamate 335 is an active-site residue. Zn(2+)-binding residues include histidine 338 and histidine 344. N-linked (GlcNAc...) asparagine glycosylation occurs at asparagine 372. 7 residues coordinate Ca(2+): cysteine 389, asparagine 392, asparagine 407, leucine 409, glutamate 411, glutamate 414, and aspartate 417. One can recognise a Disintegrin domain in the interval 402–488; it reads PPLCGNELLE…ECPADVFHKN (87 aa). Intrachain disulfides connect cysteine 405/cysteine 434, cysteine 416/cysteine 429, cysteine 418/cysteine 424, cysteine 428/cysteine 451, cysteine 442/cysteine 448, cysteine 447/cysteine 473, cysteine 460/cysteine 480, cysteine 467/cysteine 499, cysteine 492/cysteine 504, cysteine 511/cysteine 561, cysteine 526/cysteine 572, cysteine 539/cysteine 549, cysteine 556/cysteine 598, and cysteine 592/cysteine 603. A D/ECD-tripeptide motif is present at residues 466 to 468; it reads ECD. 5 residues coordinate Ca(2+): aspartate 468, proline 469, glutamate 471, aspartate 483, and valine 484.

It belongs to the venom metalloproteinase (M12B) family. P-III subfamily. P-IIIa sub-subfamily. As to quaternary structure, monomer. Requires Zn(2+) as cofactor. N-glycosylated. In terms of tissue distribution, expressed by the venom gland.

It is found in the secreted. Its activity is regulated as follows. The proteinase activity is slightly enhanced by Ca(2+) and Mg(2+), but is completely inhibited by Zn(2+). Is completely inhibited by phenanthroline and EDTA. Not inhibited by PMSF. In terms of biological role, snake venom zinc metalloprotease that causes hemorrhage and dose-dependently inhibits platelet aggregation triggered by collagen. This inhibition is due to its binding to glycoprotein VI (GP6) and collagen. The binding to GP6 results in inhibition of the signaling pathway (decrease of tyrosine phosphorylation of signaling proteins such as Syk, LAT, PI3-K and PLCgamma2). Preferentially cleaves alpha chain (FGA) of fibrinogen, followed by beta chain (FGB). Also degrades the extracellular matrix protein fibronectin (FN1), and cleaves collagen and von Willebrand factor (VWF). The polypeptide is Zinc metalloproteinase-disintegrin-like acurhagin (Deinagkistrodon acutus (Hundred-pace snake)).